The primary structure comprises 158 residues: Large ribosomal subunit protein uL11 (158 aa).

Residues 1–28 (MAGTIEALVPGGQATPGPPLGPELGPTP) are disordered.

This sequence belongs to the universal ribosomal protein uL11 family. As to quaternary structure, part of the ribosomal stalk of the 50S ribosomal subunit. Interacts with L10 and the large rRNA to form the base of the stalk. L10 forms an elongated spine to which L12 dimers bind in a sequential fashion forming a multimeric L10(L12)X complex.

In terms of biological role, forms part of the ribosomal stalk which helps the ribosome interact with GTP-bound translation factors. The protein is Large ribosomal subunit protein uL11 of Halorubrum lacusprofundi (strain ATCC 49239 / DSM 5036 / JCM 8891 / ACAM 34).